Consider the following 289-residue polypeptide: UPF0173 metal-dependent hydrolase H16_A2129 (289 aa).

This sequence belongs to the UPF0173 family.

This chain is UPF0173 metal-dependent hydrolase H16_A2129, found in Cupriavidus necator (strain ATCC 17699 / DSM 428 / KCTC 22496 / NCIMB 10442 / H16 / Stanier 337) (Ralstonia eutropha).